The sequence spans 782 residues: Nezukol synthase KSL3 (782 aa).

Mg(2+) contacts are provided by D529, D533, N677, and E685. Positions 529 to 533 match the DDXXD motif motif; the sequence is DDVFD.

This sequence belongs to the terpene synthase family. Requires Mg(2+) as cofactor. In terms of tissue distribution, highly expressed in leaves, and, at low levels, in stems, but barely in roots and flowers.

It catalyses the reaction (+)-copalyl diphosphate = miltiradiene + diphosphate. It carries out the reaction (+)-copalyl diphosphate + H2O = nezukol + diphosphate. The protein operates within secondary metabolite biosynthesis; terpenoid biosynthesis. In terms of biological role, involved in the biosynthesis of ent-kaurene diterpenoids natural products such as oridonin, miltiradiene, eriocalyxin B and nezukol, known to exhibit antitumor, anti-inflammatory and antibacterial activities. Catalyzes the conversion of (+)-copalyl diphosphate ((+)-CPP) to nezukol and miltiradiene. The reaction mechanism proceeds via the ionization of the diphosphate group of (+)-CPP, followed by formation of an intermediary pimar-15-en-8-yl(+) carbocation and neutralization of the carbocation by water capture at C-8 to yield nezukol. Can interact with ent-copalyl diphosphate (ent-CPP) but seems unable to use it as substrate. In Isodon rubescens (Rabdosia rubescens), this protein is Nezukol synthase KSL3.